The chain runs to 261 residues: Beta cell expansion factor A (261 aa).

The first 21 residues, 1 to 21 (MNKRNWLLALSLSLAFSPCYA), serve as a signal peptide directing secretion. An SYLF domain region spans residues 99–261 (KTAKEARIAI…IDKDLTETSR (163 aa)).

Its subcellular location is the secreted. The protein localises to the host. In terms of biological role, stimulates the proliferation of insulin-producing beta cells during development in gnotobiotic zebrafish and mice. BefA is a microbiome-derived protein that traffics from the host intestinal lumen to the pancreas to act directly on pancreatic islets. In pancreas, interacts directly with host beta cells and elicits their proliferation via a mechanism of increasing membrane permeabilization. Can also permeabilize bacterial cell membranes, but does not show killing of target bacteria. The polypeptide is Beta cell expansion factor A (Aeromonas veronii).